Reading from the N-terminus, the 1165-residue chain is Transient receptor potential cation channel subfamily M member 5 (1165 aa).

Over 1–715 the chain is Cytoplasmic; sequence MVEKSSERFD…LRRWNRFWSA (715 aa). Position 121 is a phosphoserine (Ser121). Ca(2+)-binding residues include Glu212, Cys324, Asp333, Asp336, and Glu337. The chain crosses the membrane as a helical span at residues 716–740; sequence PVTVFMGNVIMYFAFLILFSYVLLL. The Extracellular portion of the chain corresponds to 741–751; that stretch reads DFRPPPPYGPS. A helical transmembrane segment spans residues 752 to 771; it reads AAEIILYFWVFTLVLEEIRQ. Ca(2+) contacts are provided by Glu768 and Gln771. Residues 772–792 are Cytoplasmic-facing; that stretch reads SFFTDEDMSILKKMKLYVEDN. The chain crosses the membrane as a helical span at residues 793 to 811; sequence WNKCDMVAISLFVVGLSCR. Ca(2+)-binding residues include Asn794 and Asp797. Topologically, residues 812-818 are extracellular; that stretch reads MAMSTYE. Residues 819–841 traverse the membrane as a helical segment; it reads AGRTVLALDFMVFTLRLIHIFAI. The Cytoplasmic portion of the chain corresponds to 842–850; sequence HKQLGPKII. Residues 851-880 traverse the membrane as a helical segment; the sequence is IVERMIKDVFFFLFFLSVWLIAYGVTTQAL. The Extracellular portion of the chain corresponds to 881 to 889; sequence LHPNDPRID. An intramembrane region (pore-forming) is located at residues 890 to 930; that stretch reads WVFRRALYRPYLHIFGQIPLEEIDAAKMPDDNCTTDVQEII. The short motif at 904 to 906 is the Selectivity filter element; that stretch reads FGQ. Residues 931 to 942 lie on the Extracellular side of the membrane; that stretch reads LGTLPPCPNIYA. The chain crosses the membrane as a helical span at residues 943 to 977; the sequence is NWLVILLLVIYLLVTNVLLLNLLIAMFSYTFQVVQ. Topologically, residues 978 to 1165 are cytoplasmic; it reads ENADIFWKFQ…TDKKLPFIDH (188 aa). A Ca(2+)-binding site is contributed by Glu994. Positions 1122–1165 are disordered; the sequence is RDAPKAPRSIAGSSRDQQPQGAKRQQPAGHPAYGTDKKLPFIDH. The span at 1132-1141 shows a compositional bias: polar residues; sequence AGSSRDQQPQ. Over residues 1156–1165 the composition is skewed to basic and acidic residues; that stretch reads TDKKLPFIDH.

This sequence belongs to the transient receptor (TC 1.A.4) family. LTrpC subfamily. TRPM5 sub-subfamily. In terms of assembly, homotetramer.

Its subcellular location is the cell membrane. It catalyses the reaction Na(+)(in) = Na(+)(out). The catalysed reaction is K(+)(in) = K(+)(out). With respect to regulation, ca(2+)-activated cation channel. Displays voltage dependence modulation. Regulated by PI(4,5)P2 levels. PI(4,5)P 2 reverses the Ca(2+) -induced desensitization of channels. Is highly temperature-sensitive. Its function is as follows. Monovalent cation-selective ion channel activated by intracellular Ca(2+) in a voltage- and temperature-dependent manner. Mediates the transport of Na(+), K(+) and Cs(+) ions equally well. Activated directly by increase in intracellular Ca(2+), but is impermeable to it. The activation mechanism of TRPM5 involves a multistep process. TRPM5 activation involves ligand binding (i.e., tastant molecule, glucose stimulation) to Gq/G-protein coupled receptors (GPCR) and leads to the breakdown of phosphatidylinositol bisphosphate (PIP2) into diacylglycerol (DAG) and inositol trisphosphate (IP3), IP3 binds to its receptors in the endoplasmic reticulum and cause Ca(2+) release. Simultaneously with the intracellular Ca(2+) release, DAG activates the protein kinase C (PKC), which phosphorylates the TRPM5 channel. This phosphorylation combined with the bound Ca(2+), leads to a robust inward current allowing the entry of sodium ions (Na+) into the cell. This ion influx depolarizes the cell membrane, generating action potentials that propagate TRPM5 signals. The chain is Transient receptor potential cation channel subfamily M member 5 from Danio rerio (Zebrafish).